The sequence spans 513 residues: MQLNPSEISELIKSRIQGLEASADVRNQGTVISVTDGIVRIHGLSDVMQGEMLEFPGNTFGLALNLERDSVGAVILGEYEHISEGDVVKTTGRILEVPVGPELVGRVVDALGNPIDGKGPVNAKLTDAIEKIAPGVIWRKSVSQPVQTGIKSIDAMVPIGRGQRELIIGDRQCGKTAVALDAIINQKGKDLICIYVAIGQKASSIMNVVRKLEETGAMEYTIVVAASASDSAAMQYLAPYAGCTMGEYFRDRGQDALIIYDDLTKQAWAYRQISLLLRRPPGREAYPGDVFYLHSRLLERAARVSEEYVEKFTNGEVKGKSGSLTALPVIETQAGDVTAFVPTNVISITDGQIFLETDLFNAGIRPAINAGVSVSRVGGAAQTKVVKKLSGGIRTDLAQYRELAAFAQFASDLDEATRKQLERGRRVTELLKQPQYQPLQVWELAVSLYAANNGYLDDLDVKQVLSFEKGLRDNLKTSHADLIKRIEDTKDLSKDDEGALRAAIESFKKSGAY.

G169–T176 is an ATP binding site.

It belongs to the ATPase alpha/beta chains family. F-type ATPases have 2 components, CF(1) - the catalytic core - and CF(0) - the membrane proton channel. CF(1) has five subunits: alpha(3), beta(3), gamma(1), delta(1), epsilon(1). CF(0) has three main subunits: a(1), b(2) and c(9-12). The alpha and beta chains form an alternating ring which encloses part of the gamma chain. CF(1) is attached to CF(0) by a central stalk formed by the gamma and epsilon chains, while a peripheral stalk is formed by the delta and b chains.

It is found in the cell inner membrane. It catalyses the reaction ATP + H2O + 4 H(+)(in) = ADP + phosphate + 5 H(+)(out). Produces ATP from ADP in the presence of a proton gradient across the membrane. The alpha chain is a regulatory subunit. The protein is ATP synthase subunit alpha of Burkholderia vietnamiensis (strain G4 / LMG 22486) (Burkholderia cepacia (strain R1808)).